Here is an 80-residue protein sequence, read N- to C-terminus: uncharacterized protein (80 aa).

This is an uncharacterized protein from Vaccinia virus (strain Western Reserve) (VACV).